Consider the following 120-residue polypeptide: MRRLPTREVVEMKMVVAVIRPEKLECVKKALEERGFVGMTVTEVKGRGEQKGIRLQFRGREVEVDLLQKTKVEVVVSDDAVDEVVEAIVSSARTGKFGDGRIFVIPVEKSVKIRTGEEEV.

ADP-binding positions include Thr40, 48-50 (GEQ), Val75, and 98-101 (GDGR). Residues Thr40, 48 to 50 (GEQ), Val75, and 98 to 101 (GDGR) contribute to the ATP site.

The protein belongs to the P(II) protein family. As to quaternary structure, homotrimer. Interacts and forms a complex with Amt1.

It is found in the cytoplasm. Functionally, involved in the regulation of nitrogen metabolism. Regulates the activity of its targets by protein-protein interaction in response to the nitrogen status of the cell. Regulates the activity of the ammonia channel Amt1 via direct interaction. This is Nitrogen regulatory protein GlnK1 from Archaeoglobus fulgidus (strain ATCC 49558 / DSM 4304 / JCM 9628 / NBRC 100126 / VC-16).